The primary structure comprises 151 residues: MATIENRLEEMLKSPVEALGHTLWGLEYIQAGKHSVVRVYIDNEKGVFIEDCAEVSRQVSAVLDVEDPISTEYTLEVSSPGVDRPLFNAEQYTAYIDETVKIQLTMPVAGSRNLKGTVTGVEGQMLTLTVDGNELIIALDNIRKGNLIAKF.

It belongs to the RimP family.

It localises to the cytoplasm. Its function is as follows. Required for maturation of 30S ribosomal subunits. In Shewanella woodyi (strain ATCC 51908 / MS32), this protein is Ribosome maturation factor RimP.